Reading from the N-terminus, the 199-residue chain is MTLAGSKAFIGQPAPNFKTTAVVNGDFKEISLGQFKGKYVVLLFYPLDFTFVCPTEIIAFSDRIAEFKQLDVAVMACSTDSHFSHLAWVNTDRKMGGLGQMNIPILAYTNHVISRAYGVLKEDDGIAYRGLFIIDPKGILGQITINDLPVGRSVDETLRLIQAFQFVDKHGEVCPANWHPGSETIKPGVKESKAYFEKH.

The Thioredoxin domain maps to 8 to 166 (AFIGQPAPNF…TLRLIQAFQF (159 aa)). The active-site Cysteine sulfenic acid (-SOH) intermediate is the C53.

It belongs to the peroxiredoxin family. AhpC/Prx1 subfamily. Homodimer; disulfide-linked, upon oxidation.

The catalysed reaction is a hydroperoxide + [thioredoxin]-dithiol = an alcohol + [thioredoxin]-disulfide + H2O. Thiol-specific peroxidase that catalyzes the reduction of hydrogen peroxide and organic hydroperoxides to water and alcohols, respectively. Plays a role in cell protection against oxidative stress by detoxifying peroxides and as sensor of hydrogen peroxide-mediated signaling events. The protein is Peroxiredoxin 2 (tsa-2) of Brugia malayi (Filarial nematode worm).